We begin with the raw amino-acid sequence, 481 residues long: UDP-N-acetylmuramoyl-L-alanyl-D-glutamate--L-lysine ligase (481 aa).

Position 42 (serine 42) interacts with UDP-N-acetyl-alpha-D-muramoyl-L-alanyl-D-glutamate. 118–124 (GTKGKTT) contacts ATP. UDP-N-acetyl-alpha-D-muramoyl-L-alanyl-D-glutamate contacts are provided by residues 160–161 (TT), serine 187, and arginine 195. Lysine 229 carries the post-translational modification N6-carboxylysine. The L-lysine recognition motif motif lies at 404–407 (DDPN).

It belongs to the MurCDEF family. MurE subfamily. In terms of processing, carboxylation is probably crucial for Mg(2+) binding and, consequently, for the gamma-phosphate positioning of ATP.

It localises to the cytoplasm. It carries out the reaction UDP-N-acetyl-alpha-D-muramoyl-L-alanyl-D-glutamate + L-lysine + ATP = UDP-N-acetyl-alpha-D-muramoyl-L-alanyl-gamma-D-glutamyl-L-lysine + ADP + phosphate + H(+). It functions in the pathway cell wall biogenesis; peptidoglycan biosynthesis. In terms of biological role, catalyzes the addition of L-lysine to the nucleotide precursor UDP-N-acetylmuramoyl-L-alanyl-D-glutamate (UMAG) in the biosynthesis of bacterial cell-wall peptidoglycan. This Streptococcus suis (strain 98HAH33) protein is UDP-N-acetylmuramoyl-L-alanyl-D-glutamate--L-lysine ligase.